Here is a 264-residue protein sequence, read N- to C-terminus: N-carbamoylsarcosine amidase (264 aa).

The active-site Nucleophile is C177. Residues 240–264 (TVPKTLSDPQPEVEAPADPVFAEQH) are disordered.

Homotetramer. The cofactor is sulfate.

It catalyses the reaction N-carbamoylsarcosine + H2O + 2 H(+) = sarcosine + NH4(+) + CO2. The protein operates within amine and polyamine degradation; creatinine degradation; sarcosine from creatinine: step 3/3. The polypeptide is N-carbamoylsarcosine amidase (Arthrobacter sp).